The following is a 52-amino-acid chain: Large ribosomal subunit protein bL33 (52 aa).

The protein belongs to the bacterial ribosomal protein bL33 family.

The sequence is that of Large ribosomal subunit protein bL33 (rpmG) from Chlamydia pneumoniae (Chlamydophila pneumoniae).